A 181-amino-acid chain; its full sequence is Peptide deformylase (181 aa).

Residues Cys103 and His145 each contribute to the Fe cation site. Residue Glu146 is part of the active site. His149 serves as a coordination point for Fe cation.

It belongs to the polypeptide deformylase family. Fe(2+) is required as a cofactor.

The catalysed reaction is N-terminal N-formyl-L-methionyl-[peptide] + H2O = N-terminal L-methionyl-[peptide] + formate. Its function is as follows. Removes the formyl group from the N-terminal Met of newly synthesized proteins. Requires at least a dipeptide for an efficient rate of reaction. N-terminal L-methionine is a prerequisite for activity but the enzyme has broad specificity at other positions. In Orientia tsutsugamushi (strain Ikeda) (Rickettsia tsutsugamushi), this protein is Peptide deformylase.